Consider the following 109-residue polypeptide: Photosystem II reaction center Psb28 protein (109 aa).

It belongs to the Psb28 family. Part of the photosystem II complex.

It is found in the plastid. It localises to the chloroplast thylakoid membrane. The chain is Photosystem II reaction center Psb28 protein from Cyanidioschyzon merolae (strain NIES-3377 / 10D) (Unicellular red alga).